Consider the following 1182-residue polypeptide: Rho guanine nucleotide exchange factor osg-1 (1182 aa).

Residues 1–12 show a composition bias toward acidic residues; it reads MLNPNDADDSDS. The disordered stretch occupies residues 1-96; sequence MLNPNDADDS…TNSEPNVDMP (96 aa). Polar residues predominate over residues 29-41; that stretch reads ATVSPSTRNSFYN. A compositionally biased stretch (basic and acidic residues) spans 69-78; sequence ASRERSESRR. One can recognise a DH domain in the interval 357–544; it reads VRHLAARELL…HCLAVAINQH (188 aa). Residues 637 to 669 adopt a coiled-coil conformation; the sequence is EDVQISKDTLSQLEEVERKLESSREDDRVLKKM. Positions 863–884 are disordered; sequence INSSGSDTESSSDEGTSTAGQT. Over residues 865 to 879 the composition is skewed to low complexity; that stretch reads SSGSDTESSSDEGTS. The stretch at 897 to 922 forms a coiled coil; it reads VVNSTERVRSRARDRLARLRNSITSI.

As to expression, expressed in muscles in the body wall and head, and in the nervous system in neurons including FLP and ASE neurons in the head.

Its function is as follows. Probable guanine nucleotide exchange factor which regulates the Rho GTPase rho-1. Functions in ASE sensory neurons where it promotes neuronal degeneration under conditions of oxidative stress. In Caenorhabditis elegans, this protein is Rho guanine nucleotide exchange factor osg-1.